The sequence spans 206 residues: Large ribosomal subunit protein uL4 (206 aa).

Residues 51–96 (LTRAEVKHSTKKPFRQKGTGNARAGMTSTPNRRGGGRAFPNKPDEN) are disordered.

This sequence belongs to the universal ribosomal protein uL4 family. Part of the 50S ribosomal subunit.

One of the primary rRNA binding proteins, this protein initially binds near the 5'-end of the 23S rRNA. It is important during the early stages of 50S assembly. It makes multiple contacts with different domains of the 23S rRNA in the assembled 50S subunit and ribosome. Functionally, forms part of the polypeptide exit tunnel. The polypeptide is Large ribosomal subunit protein uL4 (Chromobacterium violaceum (strain ATCC 12472 / DSM 30191 / JCM 1249 / CCUG 213 / NBRC 12614 / NCIMB 9131 / NCTC 9757 / MK)).